The sequence spans 132 residues: Large ribosomal subunit protein uL14 (132 aa).

Belongs to the universal ribosomal protein uL14 family. Part of the 50S ribosomal subunit. Forms a cluster with proteins L3 and L24e, part of which may contact the 16S rRNA in 2 intersubunit bridges.

Its function is as follows. Binds to 23S rRNA. Forms part of two intersubunit bridges in the 70S ribosome. The polypeptide is Large ribosomal subunit protein uL14 (Methanoregula boonei (strain DSM 21154 / JCM 14090 / 6A8)).